Reading from the N-terminus, the 357-residue chain is UDP-N-acetylglucosamine--N-acetylmuramyl-(pentapeptide) pyrophosphoryl-undecaprenol N-acetylglucosamine transferase (357 aa).

UDP-N-acetyl-alpha-D-glucosamine-binding positions include Thr12–Gly14, Arg166, Ser196, and Gln291.

This sequence belongs to the glycosyltransferase 28 family. MurG subfamily.

Its subcellular location is the cell membrane. The catalysed reaction is di-trans,octa-cis-undecaprenyl diphospho-N-acetyl-alpha-D-muramoyl-L-alanyl-D-glutamyl-meso-2,6-diaminopimeloyl-D-alanyl-D-alanine + UDP-N-acetyl-alpha-D-glucosamine = di-trans,octa-cis-undecaprenyl diphospho-[N-acetyl-alpha-D-glucosaminyl-(1-&gt;4)]-N-acetyl-alpha-D-muramoyl-L-alanyl-D-glutamyl-meso-2,6-diaminopimeloyl-D-alanyl-D-alanine + UDP + H(+). The protein operates within cell wall biogenesis; peptidoglycan biosynthesis. Cell wall formation. Catalyzes the transfer of a GlcNAc subunit on undecaprenyl-pyrophosphoryl-MurNAc-pentapeptide (lipid intermediate I) to form undecaprenyl-pyrophosphoryl-MurNAc-(pentapeptide)GlcNAc (lipid intermediate II). This is UDP-N-acetylglucosamine--N-acetylmuramyl-(pentapeptide) pyrophosphoryl-undecaprenol N-acetylglucosamine transferase from Geobacillus kaustophilus (strain HTA426).